The following is a 239-amino-acid chain: Ribonuclease PH (239 aa).

Phosphate is bound by residues arginine 87 and 125–127 (GTR).

It belongs to the RNase PH family. Homohexameric ring arranged as a trimer of dimers.

It catalyses the reaction tRNA(n+1) + phosphate = tRNA(n) + a ribonucleoside 5'-diphosphate. Functionally, phosphorolytic 3'-5' exoribonuclease that plays an important role in tRNA 3'-end maturation. Removes nucleotide residues following the 3'-CCA terminus of tRNAs; can also add nucleotides to the ends of RNA molecules by using nucleoside diphosphates as substrates, but this may not be physiologically important. Probably plays a role in initiation of 16S rRNA degradation (leading to ribosome degradation) during starvation. This is Ribonuclease PH from Dehalococcoides mccartyi (strain ATCC BAA-2266 / KCTC 15142 / 195) (Dehalococcoides ethenogenes (strain 195)).